The primary structure comprises 283 residues: MMTHWPSPAKLNLFLYITGQRADGYHTLQTLFQFLDYGDTLHIEPRRDGEIHLLTPVTGVENEDNLIVRAARLLMKVASESGRLPAGSGADISIEKRLPMGGGLGGGSSNAATVLVALNHLWQCGLSIDELTTLGLTLGADVPVFVRGHAAFAEGVGEILTPVNPPEKWYLVAHPGVSIPTPVIFKDPQLPRNTPKRSIDTLLKCEFSNDCEVIARKRFREVDAALSWLLEYAPSRLTGTGACVFAEFDTESCARQVLEQAPEWLNAFVAKGVNLSPLHRELL.

Residue lysine 10 is part of the active site. 99–109 (PMGGGLGGGSS) contributes to the ATP binding site. Aspartate 141 is an active-site residue.

This sequence belongs to the GHMP kinase family. IspE subfamily. As to quaternary structure, homodimer.

It catalyses the reaction 4-CDP-2-C-methyl-D-erythritol + ATP = 4-CDP-2-C-methyl-D-erythritol 2-phosphate + ADP + H(+). It participates in isoprenoid biosynthesis; isopentenyl diphosphate biosynthesis via DXP pathway; isopentenyl diphosphate from 1-deoxy-D-xylulose 5-phosphate: step 3/6. Its function is as follows. Catalyzes the phosphorylation of the position 2 hydroxy group of 4-diphosphocytidyl-2C-methyl-D-erythritol. This chain is 4-diphosphocytidyl-2-C-methyl-D-erythritol kinase, found in Salmonella gallinarum (strain 287/91 / NCTC 13346).